The sequence spans 851 residues: Pentatricopeptide repeat-containing protein At3g54980, mitochondrial (851 aa).

Residues M1–C26 constitute a mitochondrion transit peptide. PPR repeat units lie at residues N162–P196, F197–G231, D232–P266, D267–V301, S303–M337, N338–P372, N373–P407, S408–T438, N442–P476, N477–P511, N512–V546, N547–E577, S583–P617, N618–L652, D653–P687, S688–C722, D723–P757, D758–P792, and N793–P827.

The protein belongs to the PPR family. P subfamily.

The protein localises to the mitochondrion. This Arabidopsis thaliana (Mouse-ear cress) protein is Pentatricopeptide repeat-containing protein At3g54980, mitochondrial.